A 368-amino-acid polypeptide reads, in one-letter code: mRNA export factor (368 aa).

Positions 15-34 (TSMFGSTTTDNHNPMKDIEV) are disordered. WD repeat units follow at residues 37-79 (SPDD…QTIP), 84-114 (MHTG…KMWD), 125-157 (QHDA…KFWD), 168-206 (QLPE…EFRR), 215-255 (HRCV…KDNF), 271-301 (QDIY…SFWD), and 310-346 (TSEQ…EFYN). The residue at position 229 (T229) is a Phosphothreonine.

Belongs to the WD repeat rae1 family. In terms of assembly, interacts with NUMA1 (via N-terminal end of the coiled-coil domain); this interaction promotes spindle formation in mitosis. Interacts with NUP98. Interacts with MYCBP2. Interacts with USP11.

The protein localises to the cytoplasm. The protein resides in the nucleus. It localises to the cytoskeleton. Its subcellular location is the spindle pole. Its function is as follows. Plays a role in mitotic bipolar spindle formation. Binds mRNA. May function in nucleocytoplasmic transport and in directly or indirectly attaching cytoplasmic mRNPs to the cytoskeleton. This is mRNA export factor (Rae1) from Mus musculus (Mouse).